Reading from the N-terminus, the 214-residue chain is MLKAPIGLLGGTFDPIHIGHLRPAIDARDALGLAEIRLIPNHIPPHKANPFCSSEQRLAMVRLAAAENPGFVVDERELKRDKPSYTIDTLMALREELPDTPLCFLMGMDSLLTLPSWHRWQALLDYAHLVVSVRPGWQPDYPTKVAELLARHHTTDATALHRRLAGHIWLADNLPIALSATRLRELLAAGQDPRYLLPASVADYIRQQGLYQAD.

Belongs to the NadD family.

It catalyses the reaction nicotinate beta-D-ribonucleotide + ATP + H(+) = deamido-NAD(+) + diphosphate. It functions in the pathway cofactor biosynthesis; NAD(+) biosynthesis; deamido-NAD(+) from nicotinate D-ribonucleotide: step 1/1. In terms of biological role, catalyzes the reversible adenylation of nicotinate mononucleotide (NaMN) to nicotinic acid adenine dinucleotide (NaAD). In Aeromonas salmonicida (strain A449), this protein is Probable nicotinate-nucleotide adenylyltransferase.